The primary structure comprises 122 residues: Small ribosomal subunit protein uS13 (122 aa).

Positions 95–122 are disordered; that stretch reads GLPVRGQRTKTNARTRKGPKKTIAGKKK.

Belongs to the universal ribosomal protein uS13 family. Part of the 30S ribosomal subunit. Forms a loose heterodimer with protein S19. Forms two bridges to the 50S subunit in the 70S ribosome.

Located at the top of the head of the 30S subunit, it contacts several helices of the 16S rRNA. In the 70S ribosome it contacts the 23S rRNA (bridge B1a) and protein L5 of the 50S subunit (bridge B1b), connecting the 2 subunits; these bridges are implicated in subunit movement. Contacts the tRNAs in the A and P-sites. The protein is Small ribosomal subunit protein uS13 of Corynebacterium glutamicum (strain ATCC 13032 / DSM 20300 / JCM 1318 / BCRC 11384 / CCUG 27702 / LMG 3730 / NBRC 12168 / NCIMB 10025 / NRRL B-2784 / 534).